A 665-amino-acid polypeptide reads, in one-letter code: BTB/POZ domain-containing protein At1g30440 (665 aa).

Positions 28-98 constitute a BTB domain; that stretch reads SDIVVEVGEM…CYGVKLELTA (71 aa). The 295-residue stretch at 214–508 folds into the NPH3 domain; that stretch reads DWWYEDASML…VQVLFFEQLQ (295 aa). The tract at residues 260–280 is disordered; that stretch reads LKRRRGGPESSGRFSTPLGSG. The span at 271–280 shows a compositional bias: polar residues; it reads GRFSTPLGSG. Ser279 bears the Phosphoserine mark. Residues 281 to 306 adopt a coiled-coil conformation; the sequence is NVLSEEEQKNLLEEIQELLRMQKGLV. A Phosphotyrosine modification is found at Tyr449. Residues 626 to 639 show a composition bias toward polar residues; that stretch reads SAQEGSVSKSNNEN. The disordered stretch occupies residues 626 to 665; sequence SAQEGSVSKSNNENVKIEKLKDVKERRGKHKKASSISSER. Positions 640–650 are enriched in basic and acidic residues; sequence VKIEKLKDVKE.

Belongs to the NPH3 family.

It participates in protein modification; protein ubiquitination. Functionally, may act as a substrate-specific adapter of an E3 ubiquitin-protein ligase complex (CUL3-RBX1-BTB) which mediates the ubiquitination and subsequent proteasomal degradation of target proteins. The protein is BTB/POZ domain-containing protein At1g30440 of Arabidopsis thaliana (Mouse-ear cress).